The following is a 38-amino-acid chain: Photosystem II reaction center protein L (38 aa).

Residues S17–F37 form a helical membrane-spanning segment.

It belongs to the PsbL family. As to quaternary structure, PSII is composed of 1 copy each of membrane proteins PsbA, PsbB, PsbC, PsbD, PsbE, PsbF, PsbH, PsbI, PsbJ, PsbK, PsbL, PsbM, PsbT, PsbX, PsbY, PsbZ, Psb30/Ycf12, at least 3 peripheral proteins of the oxygen-evolving complex and a large number of cofactors. It forms dimeric complexes.

It localises to the plastid. It is found in the chloroplast thylakoid membrane. One of the components of the core complex of photosystem II (PSII). PSII is a light-driven water:plastoquinone oxidoreductase that uses light energy to abstract electrons from H(2)O, generating O(2) and a proton gradient subsequently used for ATP formation. It consists of a core antenna complex that captures photons, and an electron transfer chain that converts photonic excitation into a charge separation. This subunit is found at the monomer-monomer interface and is required for correct PSII assembly and/or dimerization. This Tupiella akineta (Green alga) protein is Photosystem II reaction center protein L.